We begin with the raw amino-acid sequence, 103 residues long: Ribonuclease VapC14 (103 aa).

Positions 3–74 (YVLDTNVVSA…WFDDKVLRIF (72 aa)) constitute a PINc domain. D6 serves as a coordination point for Mg(2+).

Belongs to the PINc/VapC protein family. Requires Mg(2+) as cofactor.

Its function is as follows. Toxic component of a type II toxin-antitoxin (TA) system. An RNase. The cognate antitoxin is VapB14. In Mycobacterium tuberculosis (strain CDC 1551 / Oshkosh), this protein is Ribonuclease VapC14 (vapC14).